We begin with the raw amino-acid sequence, 362 residues long: S-adenosylmethionine decarboxylase proenzyme 2 (362 aa).

Catalysis depends on residues Glu9 and Glu12. Glu68 provides a ligand contact to substrate. The active-site Schiff-base intermediate with substrate; via pyruvic acid is Ser69. At Ser69 the chain carries Pyruvic acid (Ser); by autocatalysis. Cys83 serves as the catalytic Proton donor; for catalytic activity. Residues Ser232 and His245 each act as proton acceptor; for processing activity in the active site. Glu249 contributes to the substrate binding site.

This sequence belongs to the eukaryotic AdoMetDC family. It depends on pyruvate as a cofactor. In terms of processing, is synthesized initially as an inactive proenzyme. Formation of the active enzyme involves a self-maturation process in which the active site pyruvoyl group is generated from an internal serine residue via an autocatalytic post-translational modification. Two non-identical subunits are generated from the proenzyme in this reaction, and the pyruvate is formed at the N-terminus of the alpha chain, which is derived from the carboxyl end of the proenzyme. The post-translation cleavage follows an unusual pathway, termed non-hydrolytic serinolysis, in which the side chain hydroxyl group of the serine supplies its oxygen atom to form the C-terminus of the beta chain, while the remainder of the serine residue undergoes an oxidative deamination to produce ammonia and the pyruvoyl group blocking the N-terminus of the alpha chain.

It carries out the reaction S-adenosyl-L-methionine + H(+) = S-adenosyl 3-(methylsulfanyl)propylamine + CO2. The protein operates within amine and polyamine biosynthesis; S-adenosylmethioninamine biosynthesis; S-adenosylmethioninamine from S-adenosyl-L-methionine: step 1/1. Its function is as follows. Essential for biosynthesis of the polyamines spermidine and spermine. Essential for polyamine homeostasis, and normal plant embryogenesis, growth and development. This chain is S-adenosylmethionine decarboxylase proenzyme 2, found in Arabidopsis thaliana (Mouse-ear cress).